The chain runs to 237 residues: CD209 antigen-like protein D (237 aa).

The Cytoplasmic portion of the chain corresponds to 1-54 (MSDSMESKTQQVVIPEDEECLMSGTRYSDISSRLQTKFGIKSLAEYTKQSRNPL). A helical; Signal-anchor for type II membrane protein transmembrane segment spans residues 55 to 75 (VLQLLSFLFLAGLLLIILILV). Topologically, residues 76 to 237 (SKVPSSEVQN…KVSTSSCTTK (162 aa)) are extracellular. Cysteines 106 and 117 form a disulfide. The C-type lectin domain occupies 112-227 (FFNGSCYFFS…CDKLLFWICK (116 aa)). N114 and N129 each carry an N-linked (GlcNAc...) asparagine glycan. 2 cysteine pairs are disulfide-bonded: C134-C226 and C205-C218. Residues E196, N198, E203, N214, and D215 each coordinate Ca(2+).

Its subcellular location is the membrane. In terms of biological role, probable pathogen-recognition receptor. May mediate the endocytosis of pathogens which are subsequently degraded in lysosomal compartments. May recognize in a calcium-dependent manner high mannose N-linked oligosaccharides in a variety of pathogen antigens. In Mus musculus (Mouse), this protein is CD209 antigen-like protein D (Cd209d).